The chain runs to 316 residues: Ornithine carbamoyltransferase (316 aa).

Residues 57–60, Gln-84, Arg-108, and 135–138 each bind carbamoyl phosphate; these read STRT and HPCQ. L-ornithine-binding positions include Asn-166, Asp-230, and 234–235; that span reads SM. Carbamoyl phosphate contacts are provided by residues 269–270 and Arg-297; that span reads CL.

The protein belongs to the aspartate/ornithine carbamoyltransferase superfamily. OTCase family.

It localises to the cytoplasm. It catalyses the reaction carbamoyl phosphate + L-ornithine = L-citrulline + phosphate + H(+). It functions in the pathway amino-acid degradation; L-arginine degradation via ADI pathway; carbamoyl phosphate from L-arginine: step 2/2. Functionally, reversibly catalyzes the transfer of the carbamoyl group from carbamoyl phosphate (CP) to the N(epsilon) atom of ornithine (ORN) to produce L-citrulline. This is Ornithine carbamoyltransferase from Bacillus cereus (strain AH187).